Reading from the N-terminus, the 360-residue chain is Phospho-N-acetylmuramoyl-pentapeptide-transferase (360 aa).

The next 10 helical transmembrane spans lie at 18–38 (VFSY…MMSL), 73–93 (TMGG…WADL), 97–117 (YVWA…VDDY), 135–155 (FWQS…STQA), 168–188 (VLPQ…VGTS), 199–219 (GLAI…AYLT), 236–256 (ASEL…FLWF), 263–283 (VFMG…IAVL), 288–308 (LLLI…ILQV), and 339–359 (IVRF…TLKI).

This sequence belongs to the glycosyltransferase 4 family. MraY subfamily. It depends on Mg(2+) as a cofactor.

It localises to the cell inner membrane. It carries out the reaction UDP-N-acetyl-alpha-D-muramoyl-L-alanyl-gamma-D-glutamyl-meso-2,6-diaminopimeloyl-D-alanyl-D-alanine + di-trans,octa-cis-undecaprenyl phosphate = di-trans,octa-cis-undecaprenyl diphospho-N-acetyl-alpha-D-muramoyl-L-alanyl-D-glutamyl-meso-2,6-diaminopimeloyl-D-alanyl-D-alanine + UMP. It functions in the pathway cell wall biogenesis; peptidoglycan biosynthesis. Functionally, catalyzes the initial step of the lipid cycle reactions in the biosynthesis of the cell wall peptidoglycan: transfers peptidoglycan precursor phospho-MurNAc-pentapeptide from UDP-MurNAc-pentapeptide onto the lipid carrier undecaprenyl phosphate, yielding undecaprenyl-pyrophosphoryl-MurNAc-pentapeptide, known as lipid I. The sequence is that of Phospho-N-acetylmuramoyl-pentapeptide-transferase from Pseudoalteromonas translucida (strain TAC 125).